A 60-amino-acid polypeptide reads, in one-letter code: Large ribosomal subunit protein bL32 (60 aa).

The segment at 1-43 is disordered; it reads MAVQQNKKSPSKRGMHRSHDALTNPPLAIEPTTGEIHLRHHIS.

Belongs to the bacterial ribosomal protein bL32 family.

The sequence is that of Large ribosomal subunit protein bL32 from Nitrosomonas europaea (strain ATCC 19718 / CIP 103999 / KCTC 2705 / NBRC 14298).